A 637-amino-acid chain; its full sequence is Probable potassium transport system protein Kup 2 (637 aa).

12 helical membrane-spanning segments follow: residues 18–38, 61–81, 107–127, 145–165, 174–194, 211–231, 255–275, 293–313, 345–365, 371–391, 402–422, and 429–449; these read FLVLLLGSIGVVYGDIGTSPL, LISLMIWTLTIIVTFKYVLFL, MPVLFFAGLIGSALFIGDAMI, PAFSDYVLPLSALIMVGLFAV, AVFFGPITVVWFLAMAWGGLI, ALWFITHAGWAGLIVLGAVFL, WFILVFPALALNYLGQGALVL, ALFPMIILATMATVIASQAVI, IYVPAVNMVLFIGVLVLIFSF, LATAYGISVTGAMVVTTLMAF, AFTAAILLAPLFSIEAVFLAA, and DGGWVPLALAGVIILVMWTWT.

This sequence belongs to the HAK/KUP transporter (TC 2.A.72) family.

It is found in the cell inner membrane. It carries out the reaction K(+)(in) + H(+)(in) = K(+)(out) + H(+)(out). In terms of biological role, transport of potassium into the cell. Likely operates as a K(+):H(+) symporter. The chain is Probable potassium transport system protein Kup 2 from Agrobacterium fabrum (strain C58 / ATCC 33970) (Agrobacterium tumefaciens (strain C58)).